The sequence spans 283 residues: Putative 4-diphosphocytidyl-2-C-methyl-D-erythritol kinase (283 aa).

Lys11 is an active-site residue. Position 95-105 (95-105 (PVCAGMGGGSS)) interacts with ATP. The active site involves Asp137.

It belongs to the GHMP kinase family. IspE subfamily.

It catalyses the reaction 4-CDP-2-C-methyl-D-erythritol + ATP = 4-CDP-2-C-methyl-D-erythritol 2-phosphate + ADP + H(+). Functionally, catalyzes the phosphorylation of the position 2 hydroxy group of 4-diphosphocytidyl-2C-methyl-D-erythritol. The sequence is that of Putative 4-diphosphocytidyl-2-C-methyl-D-erythritol kinase from Streptococcus equi subsp. equi (strain 4047).